The sequence spans 329 residues: Chloroplast envelope quinone oxidoreductase homolog (329 aa).

Arginine 58 is a substrate binding site.

The protein belongs to the zinc-containing alcohol dehydrogenase family. Quinone oxidoreductase subfamily. As to quaternary structure, homodimer or homotetramer. Transition to monomer upon NADPH binding. Interacts with calmodulin. Interacts with HP30-1, HP30-2 and HP20.

The protein localises to the plastid. The protein resides in the chloroplast inner membrane. Its function is as follows. NADPH-dependent alpha,beta-unsaturated oxoene reductase reducing the double bond of medium-chain (C9) to long-chain (C18) reactive electrophile species deriving from poly-unsaturated fatty acid peroxides. The best substrates are 13-lipoxygenase-derived gamma-ketols, but is unable to reduce the double bond of short-chain alkenals and alkenones such as acrolein, crotonaldehyde, 3-buten-2-one, 4-hexen-3-one and trans-2-hexenal, or quinones such as duroquinone, decylubiquinone, coenzyme Q0, menadione, menaquinone and phylloquinone. Can use trans-2-nonenal, trans-3-decen-2-one, 4-hydroxynonenal, 12-oxo-10(E) dodecanoate (traumatin), 4-oxononenal, trans-1,3 diphenyl-2-propenone, trans-1,4-diphenyl-2-butene-1,4-dione, 9-oxo-12,13-epoxy-(10E)-octadecenoic acid (trans-EKODE-1b), 9-hydroxy-12-oxo-10(E)-octadecenoic acid, 9-Hydroxy-12-oxo-10(E),15(Z)-octadecadienoic acid and 9,13-dihydroxy-10-oxo-11-octadecenoic acid as substrates, but has no activity with 13(R,S)-hydroperoxy-9(Z),11(E)-octadecadienoic acid (13-HPOD), 9(S),12(S),13(S)-trihydroxy-10(E)-octadecenoic acid, 13-hydroxy-12-oxo-9(Z)-octadecenoic acid, 9-oxo-10(E),12(Z)-octadecadienoic acid (9-KODE), 13-oxo-9(Z),11(E)-octadecadienoic acid (13-KODE) and 12-oxo-10,15(Z)-phytodienoic acid (12-OPDA). The protein is Chloroplast envelope quinone oxidoreductase homolog of Arabidopsis thaliana (Mouse-ear cress).